The chain runs to 115 residues: Superoxide reductase (115 aa).

6 residues coordinate Fe cation: E14, H16, H41, H47, C102, and H105.

Belongs to the desulfoferrodoxin family. Homotetramer. Fe cation is required as a cofactor.

The catalysed reaction is reduced [rubredoxin] + superoxide + 2 H(+) = oxidized [rubredoxin] + H2O2. Uses electrons from reduced NADP, by way of rubredoxin and an oxidoreductase, to catalyze the reduction of superoxide to hydrogen peroxide. This chain is Superoxide reductase (sorA), found in Pyrococcus abyssi (strain GE5 / Orsay).